The chain runs to 897 residues: Ubiquitin carboxyl-terminal hydrolase 33 (897 aa).

The UBP-type zinc finger occupies 7–110 (NDCPHLECVG…KQLPNAAKAV (104 aa)). Zn(2+)-binding residues include cysteine 9, histidine 11, cysteine 31, cysteine 34, cysteine 44, cysteine 49, cysteine 54, histidine 61, histidine 65, histidine 71, cysteine 84, and cysteine 87. The USP domain maps to 156–670 (TGLKNIGNTC…EAYVLFYKKS (515 aa)). Cysteine 165 functions as the Nucleophile in the catalytic mechanism. Disordered regions lie at residues 261-308 (LIPE…GPRV) and 343-420 (GSHG…HKKV). Positions 287–297 (DDFQSCESCGS) are enriched in polar residues. Basic and acidic residues-rich tracts occupy residues 299 to 308 (DRADNEGPRV) and 344 to 353 (SHGDLDKDVD). Polar residues predominate over residues 355–396 (TSDSRPIISSQGAIKAQGRTSDSEIQVSSTVRPQSPTGNEGI). Positions 398–411 (SRLSSSPPKSSAWP) are enriched in low complexity. The active-site Proton acceptor is histidine 628. DUSP domains follow at residues 672 to 765 (DETQ…LYVC) and 773 to 876 (EKLE…RPSV). The span at 875 to 884 (SVSHQESETS) shows a compositional bias: low complexity. Positions 875–897 (SVSHQESETSQSEEKIEVETRTV) are disordered. Residues 886–897 (SEEKIEVETRTV) show a composition bias toward basic and acidic residues.

It belongs to the peptidase C19 family. USP20/USP33 subfamily.

It is found in the cytoplasm. Its subcellular location is the perinuclear region. It localises to the cytoskeleton. The protein resides in the microtubule organizing center. The protein localises to the centrosome. The catalysed reaction is Thiol-dependent hydrolysis of ester, thioester, amide, peptide and isopeptide bonds formed by the C-terminal Gly of ubiquitin (a 76-residue protein attached to proteins as an intracellular targeting signal).. Deubiquitinating enzyme involved in various processes such as centrosome duplication, cellular migration and beta-2 adrenergic receptor/ADRB2 recycling. Involved in regulation of centrosome duplication by mediating deubiquitination of ccp110 in S and G2/M phase, leading to stabilize ccp110 during the period which centrioles duplicate and elongate. Involved in cell migration via its interaction with intracellular domain of robo1, leading to regulate the Slit signaling. Plays a role in commissural axon guidance cross the ventral midline of the neural tube in a Slit-dependent manner, possibly by mediating the deubiquitination of robo1. Acts as a regulator of G-protein coupled receptor (GPCR) signaling by mediating the deubiquitination of beta-arrestins (arrb1 and arrb2) and beta-2 adrenergic receptor (adrb2). Deubiquitinates dio2, thereby regulating thyroid hormone regulation. Mediates deubiquitination of both 'Lys-48'- and 'Lys-63'-linked polyubiquitin chains. This Danio rerio (Zebrafish) protein is Ubiquitin carboxyl-terminal hydrolase 33 (usp33).